A 298-amino-acid polypeptide reads, in one-letter code: MTDAPEISPLDQARILSEALPHMQEYDEETIVIKYGGHAMGAEDLAKAFARDIVLLEQTAINPVVVHGGGPQIATMLKRLGIKSEFAAGLRITDAATIEIVEMVLAGSINKQLVGYINEAGGKAVGLCGKDGNMVSATKATRTMVDPDSRIEEVIDLGFVGEPEKVDLTLLNQLIGHELIPVLAPLATSSSGQTFNVNADTFAGAVAGALKAKRLLLLTDVPGVLDKSKKLIPELSVKDARRLIADGTISGGMIPKVETCIYALEQGVQGVVIIDGKTPHAVLLELFTNQGTGTLIHK.

Residues 69 to 70 (GG), R91, and N196 each bind substrate.

This sequence belongs to the acetylglutamate kinase family. ArgB subfamily.

It localises to the cytoplasm. The enzyme catalyses N-acetyl-L-glutamate + ATP = N-acetyl-L-glutamyl 5-phosphate + ADP. It functions in the pathway amino-acid biosynthesis; L-arginine biosynthesis; N(2)-acetyl-L-ornithine from L-glutamate: step 2/4. In terms of biological role, catalyzes the ATP-dependent phosphorylation of N-acetyl-L-glutamate. This is Acetylglutamate kinase from Rhodopseudomonas palustris (strain BisB18).